The following is a 249-amino-acid chain: ATP-dependent Clp protease proteolytic subunit (249 aa).

The active-site Nucleophile is the S107. H132 is a catalytic residue. The segment at 212-249 (ESASQDNSLDPDAPDESASQDNSLDPDAPDETRPPKLR) is disordered.

Belongs to the peptidase S14 family. As to quaternary structure, component of the chloroplastic Clp protease core complex.

Its subcellular location is the plastid. The protein resides in the chloroplast stroma. The enzyme catalyses Hydrolysis of proteins to small peptides in the presence of ATP and magnesium. alpha-casein is the usual test substrate. In the absence of ATP, only oligopeptides shorter than five residues are hydrolyzed (such as succinyl-Leu-Tyr-|-NHMec, and Leu-Tyr-Leu-|-Tyr-Trp, in which cleavage of the -Tyr-|-Leu- and -Tyr-|-Trp bonds also occurs).. In terms of biological role, cleaves peptides in various proteins in a process that requires ATP hydrolysis. Has a chymotrypsin-like activity. Plays a major role in the degradation of misfolded proteins. This Oenothera elata subsp. hookeri (Hooker's evening primrose) protein is ATP-dependent Clp protease proteolytic subunit.